Here is a 430-residue protein sequence, read N- to C-terminus: Histidine--tRNA ligase (430 aa).

Belongs to the class-II aminoacyl-tRNA synthetase family. As to quaternary structure, homodimer.

Its subcellular location is the cytoplasm. It carries out the reaction tRNA(His) + L-histidine + ATP = L-histidyl-tRNA(His) + AMP + diphosphate + H(+). This Chlamydia felis (strain Fe/C-56) (Chlamydophila felis) protein is Histidine--tRNA ligase.